Here is a 186-residue protein sequence, read N- to C-terminus: ATP synthase subunit delta (186 aa).

This sequence belongs to the ATPase delta chain family. In terms of assembly, F-type ATPases have 2 components, F(1) - the catalytic core - and F(0) - the membrane proton channel. F(1) has five subunits: alpha(3), beta(3), gamma(1), delta(1), epsilon(1). CF(0) has four main subunits: a(1), b(1), b'(1) and c(10-14). The alpha and beta chains form an alternating ring which encloses part of the gamma chain. F(1) is attached to F(0) by a central stalk formed by the gamma and epsilon chains, while a peripheral stalk is formed by the delta, b and b' chains.

It localises to the cell inner membrane. In terms of biological role, f(1)F(0) ATP synthase produces ATP from ADP in the presence of a proton or sodium gradient. F-type ATPases consist of two structural domains, F(1) containing the extramembraneous catalytic core and F(0) containing the membrane proton channel, linked together by a central stalk and a peripheral stalk. During catalysis, ATP synthesis in the catalytic domain of F(1) is coupled via a rotary mechanism of the central stalk subunits to proton translocation. Functionally, this protein is part of the stalk that links CF(0) to CF(1). It either transmits conformational changes from CF(0) to CF(1) or is implicated in proton conduction. The chain is ATP synthase subunit delta from Roseobacter denitrificans (strain ATCC 33942 / OCh 114) (Erythrobacter sp. (strain OCh 114)).